Reading from the N-terminus, the 367-residue chain is MNKPKVVVGLSGGVDSSVAALRLQQQGYPTSGLFMKNWVDFADESECTVAQDREDAQAVTSLLGISFHEANFAMEYWDRVFHYFLEEYRLGRTPNPDILCNREIKFKTFLDHALALGNTLIATGHYARIDQKEGRYRLLKGRDKNKDQSYFLYTLGQKQLSHTLFPLGELEKPQVRRIAIQARLPNHSKKDSTGICFIGERRFKEFLSRYLPAQPGEMRTPDKEWIGQHDGLMYYTLGQRRGLGIGGRKNSNGAPWFVVGKNLPQNTLYVAQGRHHPWLKSLILEANQLHWVAGHPPPLPYSCTAKIRYRQTDQHCTLTAIANGYIKVIFNAPQYAATPGQAIVFYQDDECLGGGTITTTDALGIQS.

Residues 9–16 (GLSGGVDS) and M35 each bind ATP. Residues 95 to 97 (NPD) form an interaction with target base in tRNA region. C100 serves as the catalytic Nucleophile. A disulfide bridge connects residues C100 and C196. Residue G124 participates in ATP binding. An interaction with tRNA region spans residues 146–148 (KDQ). Catalysis depends on C196, which acts as the Cysteine persulfide intermediate. The interval 308–309 (RY) is interaction with tRNA.

It belongs to the MnmA/TRMU family.

The protein localises to the cytoplasm. It carries out the reaction S-sulfanyl-L-cysteinyl-[protein] + uridine(34) in tRNA + AH2 + ATP = 2-thiouridine(34) in tRNA + L-cysteinyl-[protein] + A + AMP + diphosphate + H(+). Catalyzes the 2-thiolation of uridine at the wobble position (U34) of tRNA, leading to the formation of s(2)U34. The sequence is that of tRNA-specific 2-thiouridylase MnmA from Nitrosococcus oceani (strain ATCC 19707 / BCRC 17464 / JCM 30415 / NCIMB 11848 / C-107).